Here is a 231-residue protein sequence, read N- to C-terminus: Sporulation protein RMD6 (231 aa).

The protein resides in the peroxisome. Required for sporulation. Required for meiotic nuclear division. The sequence is that of Sporulation protein RMD6 (RMD6) from Saccharomyces cerevisiae (strain ATCC 204508 / S288c) (Baker's yeast).